Here is an 88-residue protein sequence, read N- to C-terminus: MANTAQARKRARQNTKRRQNSASQRSMVRTYLKRVDAAIAAKDYDAATEAYKKAVPVLDRMADKGILHKNKAARRKSRLNKTIKGLQA.

The segment at 1–26 (MANTAQARKRARQNTKRRQNSASQRS) is disordered. Positions 7 to 19 (ARKRARQNTKRRQ) are enriched in basic residues.

Belongs to the bacterial ribosomal protein bS20 family.

In terms of biological role, binds directly to 16S ribosomal RNA. In Psychrobacter arcticus (strain DSM 17307 / VKM B-2377 / 273-4), this protein is Small ribosomal subunit protein bS20.